Reading from the N-terminus, the 152-residue chain is Sec-independent protein translocase protein TatB (152 aa).

Residues 1-21 form a helical membrane-spanning segment; sequence MLDVGFGELFCFGIIALLVLG.

It belongs to the TatB family. The Tat system comprises two distinct complexes: a TatABC complex, containing multiple copies of TatA, TatB and TatC subunits, and a separate TatA complex, containing only TatA subunits. Substrates initially bind to the TatABC complex, which probably triggers association of the separate TatA complex to form the active translocon.

The protein resides in the cell inner membrane. Part of the twin-arginine translocation (Tat) system that transports large folded proteins containing a characteristic twin-arginine motif in their signal peptide across membranes. Together with TatC, TatB is part of a receptor directly interacting with Tat signal peptides. TatB may form an oligomeric binding site that transiently accommodates folded Tat precursor proteins before their translocation. The protein is Sec-independent protein translocase protein TatB of Acinetobacter baylyi (strain ATCC 33305 / BD413 / ADP1).